A 163-amino-acid chain; its full sequence is Nucleotide-binding protein AM1_1863 (163 aa).

This sequence belongs to the YajQ family.

Nucleotide-binding protein. In Acaryochloris marina (strain MBIC 11017), this protein is Nucleotide-binding protein AM1_1863.